Here is a 374-residue protein sequence, read N- to C-terminus: Pectate lyase 1 (374 aa).

A signal peptide spans 1–22 (MKYLLPSAAAGLLLLAAQPTMA). An intrachain disulfide couples Cys-93 to Cys-176. Residues Asp-150, Asp-152, Glu-187, and Asp-191 each coordinate Ca(2+). Arg-239 is an active-site residue. Residues Cys-350 and Cys-373 are joined by a disulfide bond.

Belongs to the polysaccharide lyase 1 family. PLADES subfamily. Requires Ca(2+) as cofactor.

The protein resides in the secreted. It catalyses the reaction Eliminative cleavage of (1-&gt;4)-alpha-D-galacturonan to give oligosaccharides with 4-deoxy-alpha-D-galact-4-enuronosyl groups at their non-reducing ends.. It functions in the pathway glycan metabolism; pectin degradation; 2-dehydro-3-deoxy-D-gluconate from pectin: step 2/5. Involved in maceration and soft-rotting of plant tissue. The chain is Pectate lyase 1 (pel1) from Pectobacterium carotovorum (Erwinia carotovora).